The primary structure comprises 314 residues: tRNA pseudouridine synthase B (314 aa).

Histidine 43 provides a ligand contact to substrate. The Nucleophile role is filled by aspartate 48. Substrate-binding residues include tyrosine 76, tyrosine 179, and leucine 200.

Belongs to the pseudouridine synthase TruB family. Type 1 subfamily.

It carries out the reaction uridine(55) in tRNA = pseudouridine(55) in tRNA. Functionally, responsible for synthesis of pseudouridine from uracil-55 in the psi GC loop of transfer RNAs. The sequence is that of tRNA pseudouridine synthase B from Citrobacter koseri (strain ATCC BAA-895 / CDC 4225-83 / SGSC4696).